We begin with the raw amino-acid sequence, 669 residues long: Histone-lysine N-methyltransferase, H3 lysine-9 specific SUVH3 (669 aa).

2 disordered regions span residues 56-127 and 270-290; these read YSSF…EKKT and ESLIYSGQGGNADKNRQASDQ. Polar residues-rich tracts occupy residues 65 to 82 and 93 to 107; these read QQPTHDTPDLNQTQNTPI and RTPTKTNGPSSSSGT. A DNA-binding region (a.T hook) is located at residues 108 to 120; it reads KRGVGRPKGTTSV. The region spanning 208–355 is the YDG domain; the sequence is GTVPGIEVGD…CNTFKYKLVR (148 aa). The region spanning 430-491 is the Pre-SET domain; it reads IGCSCSGSCS…SCKNRVIQTG (62 aa). Zn(2+)-binding residues include cysteine 432, cysteine 434, cysteine 438, cysteine 445, cysteine 447, cysteine 473, cysteine 477, cysteine 479, and cysteine 483. The 145-residue stretch at 494-638 folds into the SET domain; it reads SRLEVFKTRN…PMAELTYDYG (145 aa). Residues 504–506, aspartate 540, tyrosine 542, arginine 592, and 595–596 contribute to the S-adenosyl-L-methionine site; these read RGW and NH. 4 residues coordinate Zn(2+): cysteine 598, cysteine 657, cysteine 659, and cysteine 664. Residues 653-669 form the Post-SET domain; that stretch reads GQRTCLCGSEQCRGSFG.

It belongs to the class V-like SAM-binding methyltransferase superfamily. Histone-lysine methyltransferase family. Suvar3-9 subfamily. As to expression, expressed in leaves stems and flowers.

The protein resides in the nucleus. It is found in the chromosome. Its subcellular location is the centromere. It catalyses the reaction L-lysyl(9)-[histone H3] + S-adenosyl-L-methionine = N(6)-methyl-L-lysyl(9)-[histone H3] + S-adenosyl-L-homocysteine + H(+). Functionally, histone methyltransferase. Methylates 'Lys-9' of histone H3. H3 'Lys-9' methylation represents a specific tag for epigenetic transcriptional repression. This Arabidopsis thaliana (Mouse-ear cress) protein is Histone-lysine N-methyltransferase, H3 lysine-9 specific SUVH3 (SUVH3).